A 790-amino-acid chain; its full sequence is Protein SEY1 (790 aa).

The Cytoplasmic portion of the chain corresponds to 1 to 692; it reads MELSEGELSH…KRSIVQHITQ (692 aa). Positions 55 to 284 constitute a GB1/RHD3-type G domain; that stretch reads GNNYHIISVF…VSNELFKPEY (230 aa). A GTP-binding site is contributed by 65 to 72; the sequence is GSQSTGKS. The helical transmembrane segment at 693–713 threads the bilayer; that stretch reads IPYYIYLIILVLGWNEFMAII. At 714–716 the chain is on the lumenal side; it reads RNP. A helical transmembrane segment spans residues 717-737; that stretch reads LFFSLSIVLGATVYVLYYLGL. The Cytoplasmic segment spans residues 738 to 790; sequence LRPALVVAQRTMDEVIVMAKTKLREVLIDDHEVTGRQLNKMAGSKENIELDDM.

This sequence belongs to the TRAFAC class dynamin-like GTPase superfamily. GB1/RHD3 GTPase family. RHD3 subfamily.

Its subcellular location is the endoplasmic reticulum membrane. Its function is as follows. Cooperates with the reticulon proteins and tubule-shaping DP1 family proteins to generate and maintain the structure of the tubular endoplasmic reticulum network. Has GTPase activity, which is required for its function in ER organization. Required for virulence and resistance to cycloheximide. In Candida albicans (strain SC5314 / ATCC MYA-2876) (Yeast), this protein is Protein SEY1.